Reading from the N-terminus, the 175-residue chain is T-cell surface glycoprotein CD3 epsilon chain (175 aa).

Positions 1–21 (MRCEVPLPLLGLLLCVVGAAA) are cleaved as a signal peptide. Over 22–100 (QGGQEEFAVE…VCANCEELDT (79 aa)) the chain is Extracellular. The helical transmembrane segment at 101–121 (FTVVGIIAADLLITLGVLILV) threads the bilayer. At 122–175 (YYFSKNKKGQSRAAAGSRPRAQKMRRPPPVPNPDYEPIRKGQRDVYAGLEHRGF) the chain is on the cytoplasmic side. Positions 133 to 163 (RAAAGSRPRAQKMRRPPPVPNPDYEPIRKGQ) are disordered. Residues 146–173 (RRPPPVPNPDYEPIRKGQRDVYAGLEHR) form the ITAM domain.

As to quaternary structure, the TCR/CD3 complex of T-lymphocytes consists of either a TCR alpha/beta or TCR gamma/delta heterodimer coexpressed at the cell surface with the invariant subunits of CD3 labeled gamma, delta, epsilon, zeta, and eta.

The protein resides in the cell membrane. The CD3 complex mediates signal transduction, resulting in T-cell activation and proliferation. Required for normal immune responses. The sequence is that of T-cell surface glycoprotein CD3 epsilon chain (CD3E) from Gallus gallus (Chicken).